We begin with the raw amino-acid sequence, 169 residues long: Heat shock protein beta-7 (169 aa).

A disordered region spans residues 1–37 (MSHRTSSAFRAERSFRSSSSSSSSSSSSASRALPAQD). The interval 1 to 70 (MSHRTSSAFR…PLAFPARPGG (70 aa)) is required for localization to SC35 splicing speckles. Over residues 16-32 (RSSSSSSSSSSSSASRA) the composition is skewed to low complexity. The region spanning 61-169 (PLAFPARPGG…QQTFRTEIKI (109 aa)) is the sHSP domain.

The protein belongs to the small heat shock protein (HSP20) family. Interacts with C-terminal domain of actin-binding protein 280. In terms of tissue distribution, found in both cardiac and slow skeletal (soleus) muscle.

Its subcellular location is the cytoplasm. The protein localises to the nucleus. The protein resides in the cajal body. This Mus musculus (Mouse) protein is Heat shock protein beta-7 (Hspb7).